A 162-amino-acid chain; its full sequence is Troponin C, skeletal muscle (162 aa).

Residue Ala1 is modified to N-acetylalanine. EF-hand domains follow at residues 17 to 52 (EMIA…LGQT), 53 to 88 (PTKE…QMKE), 93 to 128 (KSEE…SGES), and 129 to 162 (ITDE…EGVQ). Ca(2+)-binding residues include Asp30, Asp32, Asp36, Glu41, Asp66, Asp68, Ser70, Thr72, Glu77, Asp106, Asn108, Asp110, Tyr112, Glu117, Asp142, Asn144, Asp146, Lys148, and Glu153.

The protein belongs to the troponin C family.

In terms of biological role, troponin is the central regulatory protein of striated muscle contraction. Tn consists of three components: Tn-I which is the inhibitor of actomyosin ATPase, Tn-T which contains the binding site for tropomyosin and Tn-C. The binding of calcium to Tn-C abolishes the inhibitory action of Tn on actin filaments. The polypeptide is Troponin C, skeletal muscle (Pelophylax lessonae (Pool frog)).